A 199-amino-acid polypeptide reads, in one-letter code: Probable molybdenum cofactor guanylyltransferase (199 aa).

Residues 6 to 8 (LAG), K18, D65, and D97 contribute to the GTP site. D97 is a Mg(2+) binding site.

This sequence belongs to the MobA family. Mg(2+) is required as a cofactor.

The protein localises to the cytoplasm. It carries out the reaction Mo-molybdopterin + GTP + H(+) = Mo-molybdopterin guanine dinucleotide + diphosphate. In terms of biological role, transfers a GMP moiety from GTP to Mo-molybdopterin (Mo-MPT) cofactor (Moco or molybdenum cofactor) to form Mo-molybdopterin guanine dinucleotide (Mo-MGD) cofactor. This is Probable molybdenum cofactor guanylyltransferase from Staphylococcus aureus (strain COL).